A 176-amino-acid chain; its full sequence is Ribosome rescue factor SmrB (176 aa).

The Smr domain maps to 93-168; sequence LDLHGYRQSE…GDAALLVLID (76 aa).

The protein belongs to the SmrB family. In terms of assembly, associates with collided ribosomes, but not with correctly translating polysomes.

Acts as a ribosome collision sensor. Detects stalled/collided disomes (pairs of ribosomes where the leading ribosome is stalled and a second ribosome has collided with it) and endonucleolytically cleaves mRNA at the 5' boundary of the stalled ribosome. Stalled/collided disomes form a new interface (primarily via the 30S subunits) that binds SmrB. Cleaved mRNA becomes available for tmRNA ligation, leading to ribosomal subunit dissociation and rescue of stalled ribosomes. This Shewanella oneidensis (strain ATCC 700550 / JCM 31522 / CIP 106686 / LMG 19005 / NCIMB 14063 / MR-1) protein is Ribosome rescue factor SmrB.